The chain runs to 2499 residues: Probable polyketide synthase 23 (2499 aa).

One can recognise a Ketosynthase family 3 (KS3) domain in the interval 11-430 (DNQVAIVGLG…GSNACVLLSE (420 aa)). Residues Cys177, His316, and His354 each act as for beta-ketoacyl synthase activity in the active site. The acyl/malonyl transferases stretch occupies residues 623–656 (GITPSIIVGHSLGEVASAFCSGMIDLETACFVIY). Catalysis depends on Ser633, which acts as the For acyl/malonyl transferase activity. The segment at 924-1044 (INQLGNKNEL…SRILMKSLDV (121 aa)) is N-terminal hotdog fold. Positions 924–1209 (INQLGNKNEL…IASTLSTNID (286 aa)) constitute a PKS/mFAS DH domain. His956 functions as the Proton acceptor; for dehydratase activity in the catalytic mechanism. Residues 1059 to 1209 (NWSTLKREQL…IASTLSTNID (151 aa)) are C-terminal hotdog fold. Asp1121 functions as the Proton donor; for dehydratase activity in the catalytic mechanism. A Carrier domain is found at 2414-2491 (EKEFSIRQDI…QIINIVTTKV (78 aa)). Residue Ser2451 is modified to O-(pantetheine 4'-phosphoryl)serine.

Pantetheine 4'-phosphate serves as cofactor.

Probable polyketide synthase. The sequence is that of Probable polyketide synthase 23 (pks23) from Dictyostelium discoideum (Social amoeba).